The primary structure comprises 444 residues: Phosphoglucosamine mutase (444 aa).

Ser100 functions as the Phosphoserine intermediate in the catalytic mechanism. The Mg(2+) site is built by Ser100, Asp234, Asp236, and Asp238. Ser100 bears the Phosphoserine mark.

This sequence belongs to the phosphohexose mutase family. The cofactor is Mg(2+). Post-translationally, activated by phosphorylation.

It carries out the reaction alpha-D-glucosamine 1-phosphate = D-glucosamine 6-phosphate. In terms of biological role, catalyzes the conversion of glucosamine-6-phosphate to glucosamine-1-phosphate. This Rubrobacter xylanophilus (strain DSM 9941 / JCM 11954 / NBRC 16129 / PRD-1) protein is Phosphoglucosamine mutase.